Consider the following 473-residue polypeptide: 1-aminocyclopropane-1-carboxylate synthase (473 aa).

Substrate-binding positions include 84–85, Y145, and D151; that span reads DY. K273 carries the post-translational modification N6-(pyridoxal phosphate)lysine.

The protein belongs to the class-I pyridoxal-phosphate-dependent aminotransferase family. In terms of assembly, homodimer. Pyridoxal 5'-phosphate is required as a cofactor.

The catalysed reaction is S-adenosyl-L-methionine = 1-aminocyclopropane-1-carboxylate + S-methyl-5'-thioadenosine + H(+). It carries out the reaction (2S)-2-amino-3-butenoate + H2O = 2-oxobutanoate + NH4(+). Its pathway is alkene biosynthesis; ethylene biosynthesis via S-adenosyl-L-methionine; ethylene from S-adenosyl-L-methionine: step 1/2. Inhibited by L-aminoethoxyvinylglycine (AVG). Inhibited by L-vinylglycine (L-VG). Inhibited by S-methylmethionine through a L-VG ketimine intermediate. Catalyzes the formation of 1-aminocyclopropane-1-carboxylate, a direct precursor of ethylene in higher plants. Also catalyzes the conversion of L-vinylglycine (L-VG) to alpha-ketobutyrate and ammonia. Can use S-methylmethionine as substrate. This chain is 1-aminocyclopropane-1-carboxylate synthase, found in Malus domestica (Apple).